The following is a 222-amino-acid chain: Putative germin-like protein subfamily 1 member 9 (222 aa).

Positions Met-1–Ala-22 are cleaved as a signal peptide. A disulfide bond links Cys-32 and Cys-49. Positions Thr-63–Met-213 constitute a Cupin type-1 domain. N-linked (GlcNAc...) asparagine glycosylation is present at Asn-78. His-111, His-113, Glu-118, and His-159 together coordinate Mn(2+).

Belongs to the germin family. In terms of assembly, oligomer (believed to be a pentamer but probably hexamer).

It is found in the secreted. Its subcellular location is the extracellular space. It localises to the apoplast. Its function is as follows. May play a role in plant defense. Probably has no oxalate oxidase activity even if the active site is conserved. This is Putative germin-like protein subfamily 1 member 9 from Arabidopsis thaliana (Mouse-ear cress).